Consider the following 293-residue polypeptide: Ribosomal protein L11 methyltransferase (293 aa).

S-adenosyl-L-methionine contacts are provided by Thr-145, Gly-166, Asp-188, and Asn-230.

It belongs to the methyltransferase superfamily. PrmA family.

Its subcellular location is the cytoplasm. It carries out the reaction L-lysyl-[protein] + 3 S-adenosyl-L-methionine = N(6),N(6),N(6)-trimethyl-L-lysyl-[protein] + 3 S-adenosyl-L-homocysteine + 3 H(+). Methylates ribosomal protein L11. The protein is Ribosomal protein L11 methyltransferase of Actinobacillus pleuropneumoniae serotype 5b (strain L20).